Reading from the N-terminus, the 193-residue chain is uncharacterized protein (193 aa).

Positions 86–181 form a coiled coil; sequence TKQRELLEIL…QVEEVQAEVG (96 aa).

This is an uncharacterized protein from Streptococcus pyogenes serotype M6 (strain ATCC BAA-946 / MGAS10394).